A 570-amino-acid polypeptide reads, in one-letter code: Proline--tRNA ligase (570 aa).

Belongs to the class-II aminoacyl-tRNA synthetase family. ProS type 1 subfamily. Homodimer.

It localises to the cytoplasm. The enzyme catalyses tRNA(Pro) + L-proline + ATP = L-prolyl-tRNA(Pro) + AMP + diphosphate. Catalyzes the attachment of proline to tRNA(Pro) in a two-step reaction: proline is first activated by ATP to form Pro-AMP and then transferred to the acceptor end of tRNA(Pro). As ProRS can inadvertently accommodate and process non-cognate amino acids such as alanine and cysteine, to avoid such errors it has two additional distinct editing activities against alanine. One activity is designated as 'pretransfer' editing and involves the tRNA(Pro)-independent hydrolysis of activated Ala-AMP. The other activity is designated 'posttransfer' editing and involves deacylation of mischarged Ala-tRNA(Pro). The misacylated Cys-tRNA(Pro) is not edited by ProRS. The sequence is that of Proline--tRNA ligase from Clostridium perfringens (strain SM101 / Type A).